The chain runs to 416 residues: Secreted RxLR effector protein 25 (416 aa).

A signal peptide spans 1–20; sequence MRSWLLLLVGLSSYFALSTS. The RxLR-dEER signature appears at 49–88; the sequence is RKLRAPGGDTNTLKDSGKARREKKVWKLFCRVFLQLDDEK.

This sequence belongs to the RxLR effector family.

It localises to the secreted. It is found in the host cytoplasm. The protein resides in the host nucleus. Functionally, effector that partially suppresses the tobacco programmed cell death induced by cell death-inducing proteins. In Plasmopara viticola (Downy mildew of grapevine), this protein is Secreted RxLR effector protein 25.